We begin with the raw amino-acid sequence, 397 residues long: 1-carboxy-3-chloro-3,4-dihydroxycyclo hexa-1,5-diene dehydrogenase (397 aa).

To P.putida PHT4.

In Comamonas testosteroni (Pseudomonas testosteroni), this protein is 1-carboxy-3-chloro-3,4-dihydroxycyclo hexa-1,5-diene dehydrogenase (cbaC).